A 342-amino-acid chain; its full sequence is N-acetyl-gamma-glutamyl-phosphate reductase (342 aa).

Cys146 is a catalytic residue.

It belongs to the NAGSA dehydrogenase family. Type 1 subfamily.

The protein resides in the cytoplasm. It carries out the reaction N-acetyl-L-glutamate 5-semialdehyde + phosphate + NADP(+) = N-acetyl-L-glutamyl 5-phosphate + NADPH + H(+). Its pathway is amino-acid biosynthesis; L-arginine biosynthesis; N(2)-acetyl-L-ornithine from L-glutamate: step 3/4. In terms of biological role, catalyzes the NADPH-dependent reduction of N-acetyl-5-glutamyl phosphate to yield N-acetyl-L-glutamate 5-semialdehyde. The protein is N-acetyl-gamma-glutamyl-phosphate reductase of Thermobifida fusca (strain YX).